The following is a 160-amino-acid chain: Protein MGF 300-2R (160 aa).

Belongs to the asfivirus MGF 300 family.

Functionally, plays a role in virus cell tropism, and may be required for efficient virus replication in macrophages. This Ornithodoros (relapsing fever ticks) protein is Protein MGF 300-2R.